Here is a 270-residue protein sequence, read N- to C-terminus: Formamidopyrimidine-DNA glycosylase (270 aa).

Pro2 serves as the catalytic Schiff-base intermediate with DNA. Catalysis depends on Glu3, which acts as the Proton donor. Lys59 (proton donor; for beta-elimination activity) is an active-site residue. DNA is bound by residues His91, Arg110, and Lys151. The FPG-type zinc-finger motif lies at Arg236–Lys270. Catalysis depends on Arg260, which acts as the Proton donor; for delta-elimination activity.

Belongs to the FPG family. In terms of assembly, monomer. The cofactor is Zn(2+).

The catalysed reaction is Hydrolysis of DNA containing ring-opened 7-methylguanine residues, releasing 2,6-diamino-4-hydroxy-5-(N-methyl)formamidopyrimidine.. The enzyme catalyses 2'-deoxyribonucleotide-(2'-deoxyribose 5'-phosphate)-2'-deoxyribonucleotide-DNA = a 3'-end 2'-deoxyribonucleotide-(2,3-dehydro-2,3-deoxyribose 5'-phosphate)-DNA + a 5'-end 5'-phospho-2'-deoxyribonucleoside-DNA + H(+). Involved in base excision repair of DNA damaged by oxidation or by mutagenic agents. Acts as a DNA glycosylase that recognizes and removes damaged bases. Has a preference for oxidized purines, such as 7,8-dihydro-8-oxoguanine (8-oxoG). Has AP (apurinic/apyrimidinic) lyase activity and introduces nicks in the DNA strand. Cleaves the DNA backbone by beta-delta elimination to generate a single-strand break at the site of the removed base with both 3'- and 5'-phosphates. In Bdellovibrio bacteriovorus (strain ATCC 15356 / DSM 50701 / NCIMB 9529 / HD100), this protein is Formamidopyrimidine-DNA glycosylase.